A 238-amino-acid chain; its full sequence is ATP synthase subunit a (238 aa).

Helical transmembrane passes span 17 to 37 (LSDM…AVAA), 75 to 95 (FLTL…LGLP), 112 to 132 (DATV…YYGV), 179 to 199 (ILLG…AVGA), and 202 to 222 (FPIM…AFIF).

The protein belongs to the ATPase A chain family. In terms of assembly, F-type ATPases have 2 components, CF(1) - the catalytic core - and CF(0) - the membrane proton channel. CF(1) has five subunits: alpha(3), beta(3), gamma(1), delta(1), epsilon(1). CF(0) has three main subunits: a(1), b(2) and c(9-12). The alpha and beta chains form an alternating ring which encloses part of the gamma chain. CF(1) is attached to CF(0) by a central stalk formed by the gamma and epsilon chains, while a peripheral stalk is formed by the delta and b chains.

It is found in the cell membrane. Key component of the proton channel; it plays a direct role in the translocation of protons across the membrane. This is ATP synthase subunit a from Bacillus sp. (strain PS3).